We begin with the raw amino-acid sequence, 110 residues long: U32-theraphotoxin-Cg1a (110 aa).

Residues M1–S19 form the signal peptide. Positions L20–R43 are excised as a propeptide. 4 disulfide bridges follow: C49-C63, C56-C69, C60-C105, and C62-C80.

It belongs to the neurotoxin 03 (Tx2) family. 02 subfamily. Expressed by the venom gland.

The protein resides in the secreted. In terms of biological role, probable ion channel inhibitor. This is U32-theraphotoxin-Cg1a from Chilobrachys guangxiensis (Chinese earth tiger tarantula).